The chain runs to 332 residues: Ferredoxin--NADP reductase 2 (332 aa).

FAD-binding residues include aspartate 33, glutamine 41, tyrosine 46, valine 86, isoleucine 121, aspartate 282, and serine 325.

Belongs to the ferredoxin--NADP reductase type 2 family. As to quaternary structure, homodimer. FAD is required as a cofactor.

The catalysed reaction is 2 reduced [2Fe-2S]-[ferredoxin] + NADP(+) + H(+) = 2 oxidized [2Fe-2S]-[ferredoxin] + NADPH. The protein is Ferredoxin--NADP reductase 2 of Sulfolobus acidocaldarius (strain ATCC 33909 / DSM 639 / JCM 8929 / NBRC 15157 / NCIMB 11770).